A 219-amino-acid chain; its full sequence is ATP-dependent dethiobiotin synthetase BioD (219 aa).

Residue 14–19 coordinates ATP; it reads DVGKTY. Residue Thr-18 coordinates Mg(2+). Lys-37 is a catalytic residue. Ser-41 is a binding site for substrate. Residues Asp-54, 114 to 117, and 175 to 176 each bind ATP; these read EGAG and NN. Mg(2+)-binding residues include Asp-54 and Glu-114.

This sequence belongs to the dethiobiotin synthetase family. In terms of assembly, homodimer. It depends on Mg(2+) as a cofactor.

The protein localises to the cytoplasm. It carries out the reaction (7R,8S)-7,8-diammoniononanoate + CO2 + ATP = (4R,5S)-dethiobiotin + ADP + phosphate + 3 H(+). Its pathway is cofactor biosynthesis; biotin biosynthesis; biotin from 7,8-diaminononanoate: step 1/2. Its function is as follows. Catalyzes a mechanistically unusual reaction, the ATP-dependent insertion of CO2 between the N7 and N8 nitrogen atoms of 7,8-diaminopelargonic acid (DAPA, also called 7,8-diammoniononanoate) to form a ureido ring. This Fusobacterium nucleatum subsp. nucleatum (strain ATCC 25586 / DSM 15643 / BCRC 10681 / CIP 101130 / JCM 8532 / KCTC 2640 / LMG 13131 / VPI 4355) protein is ATP-dependent dethiobiotin synthetase BioD.